The following is a 124-amino-acid chain: Ribosome-binding factor A (124 aa).

It belongs to the RbfA family. Monomer. Binds 30S ribosomal subunits, but not 50S ribosomal subunits or 70S ribosomes.

It is found in the cytoplasm. Functionally, one of several proteins that assist in the late maturation steps of the functional core of the 30S ribosomal subunit. Associates with free 30S ribosomal subunits (but not with 30S subunits that are part of 70S ribosomes or polysomes). Required for efficient processing of 16S rRNA. May interact with the 5'-terminal helix region of 16S rRNA. The protein is Ribosome-binding factor A of Sorangium cellulosum (strain So ce56) (Polyangium cellulosum (strain So ce56)).